Consider the following 231-residue polypeptide: MTHVGKRVVKNREGIDRVKLYPVDEAVKLIKERANAKFDETVEIAMNLGVDPKHADQMVRGVVNLPNGTGRTLRVAVFARGAKADEALAAGADIVGAEDLVATVQGGTIAFDRCIATPDMMPLVGRLGKVLGPRGLMPNPKVGTVTMDVAGAVKASKGGAVEFRVEKAGIIQGSVGKASFETEKLLENIAAFVDAVAKAKPQGAKGTYIQRVALSSTMGPGVKIDPATVTA.

This sequence belongs to the universal ribosomal protein uL1 family. In terms of assembly, part of the 50S ribosomal subunit.

In terms of biological role, binds directly to 23S rRNA. The L1 stalk is quite mobile in the ribosome, and is involved in E site tRNA release. Functionally, protein L1 is also a translational repressor protein, it controls the translation of the L11 operon by binding to its mRNA. This is Large ribosomal subunit protein uL1 from Beijerinckia indica subsp. indica (strain ATCC 9039 / DSM 1715 / NCIMB 8712).